Consider the following 317-residue polypeptide: Tricarboxylate transport protein B, mitochondrial (317 aa).

Positions 1-20 (MSGSPKFVSPFHRPHCLSAA) are cleaved as a propeptide — removed in mature form. Solcar repeat units lie at residues 29-117 (THPG…LSNQ), 128-214 (TRGL…LRNW), and 224-309 (INPV…VVKV). 4 consecutive transmembrane segments (helical) span residues 35-55 (ILAG…TEYV), 130-150 (GLIC…CPME), 223-243 (SINP…SVFG), and 294-314 (MDVA…NKVW).

It belongs to the mitochondrial carrier (TC 2.A.29) family. Possesses a short cleavable presequence, which, however, is found to be dispensable both for targeting to mitochondria and insertion into the inner membrane. However, the presequence is required to keep SLC25A1 in a soluble state and thus in an import-competent state. Mature SLC25A1 lacking the presequence is prone to aggregation.

The protein localises to the mitochondrion inner membrane. It carries out the reaction (S)-malate(in) + citrate(out) = (S)-malate(out) + citrate(in). It catalyses the reaction D-threo-isocitrate(in) + citrate(out) = D-threo-isocitrate(out) + citrate(in). The catalysed reaction is citrate(out) + succinate(in) = citrate(in) + succinate(out). The enzyme catalyses cis-aconitate(in) + citrate(out) = cis-aconitate(out) + citrate(in). It carries out the reaction trans-aconitate(in) + citrate(out) = trans-aconitate(out) + citrate(in). It catalyses the reaction phosphoenolpyruvate(in) + citrate(out) = phosphoenolpyruvate(out) + citrate(in). The catalysed reaction is maleate(in) + citrate(out) = maleate(out) + citrate(in). In terms of biological role, mitochondrial electroneutral antiporter that exports citrate from the mitochondria into the cytosol in exchange for malate. Also able to mediate the exchange of citrate for isocitrate, phosphoenolpyruvate, cis-aconitate and to a lesser extent trans-aconitate, maleate and succinate. In the cytoplasm, citrate plays important roles in fatty acid and sterol synthesis, regulation of glycolysis, protein acetylation, and other physiopathological processes. In Danio rerio (Zebrafish), this protein is Tricarboxylate transport protein B, mitochondrial.